We begin with the raw amino-acid sequence, 252 residues long: Cytochrome c oxidase subunit 2 (252 aa).

Over 1 to 39 (MFLIMLKGHILMDAPTPWGIFFQDSASPQMEGIMELHNN) the chain is Mitochondrial intermembrane. Residues 40–59 (IMFYLAIILFTVTWMMITII) form a helical membrane-spanning segment. The Mitochondrial matrix portion of the chain corresponds to 60 to 81 (RNFVAKKSPIAHKYMNHGTLIE). A helical membrane pass occupies residues 82-105 (LIWTITPAFILILIAFPSFKLLYL). Residues 106–252 (MDEVMDPSLV…LLWLRDQMEG (147 aa)) lie on the Mitochondrial intermembrane side of the membrane. The Cu cation site is built by His-184, Cys-219, Glu-221, Cys-223, His-227, and Met-230. Glu-221 lines the Mg(2+) pocket.

It belongs to the cytochrome c oxidase subunit 2 family. Component of the cytochrome c oxidase (complex IV, CIV), a multisubunit enzyme composed of a catalytic core of 3 subunits and several supernumerary subunits. The complex exists as a monomer or a dimer and forms supercomplexes (SCs) in the inner mitochondrial membrane with ubiquinol-cytochrome c oxidoreductase (cytochrome b-c1 complex, complex III, CIII). It depends on Cu cation as a cofactor.

The protein localises to the mitochondrion inner membrane. The catalysed reaction is 4 Fe(II)-[cytochrome c] + O2 + 8 H(+)(in) = 4 Fe(III)-[cytochrome c] + 2 H2O + 4 H(+)(out). Its function is as follows. Component of the cytochrome c oxidase, the last enzyme in the mitochondrial electron transport chain which drives oxidative phosphorylation. The respiratory chain contains 3 multisubunit complexes succinate dehydrogenase (complex II, CII), ubiquinol-cytochrome c oxidoreductase (cytochrome b-c1 complex, complex III, CIII) and cytochrome c oxidase (complex IV, CIV), that cooperate to transfer electrons derived from NADH and succinate to molecular oxygen, creating an electrochemical gradient over the inner membrane that drives transmembrane transport and the ATP synthase. Cytochrome c oxidase is the component of the respiratory chain that catalyzes the reduction of oxygen to water. Electrons originating from reduced cytochrome c in the intermembrane space (IMS) are transferred via the dinuclear copper A center (CU(A)) of subunit 2 and heme A of subunit 1 to the active site in subunit 1, a binuclear center (BNC) formed by heme A3 and copper B (CU(B)). The BNC reduces molecular oxygen to 2 water molecules using 4 electrons from cytochrome c in the IMS and 4 protons from the mitochondrial matrix. This chain is Cytochrome c oxidase subunit 2 (cox2), found in Emericella nidulans (Aspergillus nidulans).